A 437-amino-acid polypeptide reads, in one-letter code: Branched-chain amino acid transport system 3 carrier protein (437 aa).

Helical transmembrane passes span 9 to 29 (ILAL…IIFP), 40 to 60 (VWLA…ITVI), 79 to 99 (YAGG…FAIP), 120 to 140 (ALFV…LYPG), 155 to 175 (ILAL…PIGT), 189 to 209 (FVNG…IVIV), 226 to 246 (YAIV…VSLF), 277 to 297 (LGSS…AVGL), 316 to 336 (LVII…TKLI), 342 to 362 (VLTA…CIGL), 369 to 389 (ILAP…LKAA), and 399 to 419 (LLHL…VATL).

Belongs to the branched chain amino acid transporter family.

It localises to the cell inner membrane. Its function is as follows. Component of the LIV-III transport system for branched-chain amino acids. BraZ is specific for isoleucine and valine. The LIV-III transport system may be H(+)-coupled. The protein is Branched-chain amino acid transport system 3 carrier protein (braZ) of Pseudomonas aeruginosa (strain ATCC 15692 / DSM 22644 / CIP 104116 / JCM 14847 / LMG 12228 / 1C / PRS 101 / PAO1).